A 53-amino-acid chain; its full sequence is Sec-independent protein translocase protein TatA (53 aa).

A helical membrane pass occupies residues 1-21; the sequence is MGMSFSHLLIVLLIIFVLFGA.

It belongs to the TatA/E family. In terms of assembly, the Tat system comprises two distinct complexes: a TatABC complex, containing multiple copies of TatA, TatB and TatC subunits, and a separate TatA complex, containing only TatA subunits. Substrates initially bind to the TatABC complex, which probably triggers association of the separate TatA complex to form the active translocon.

The protein resides in the cell inner membrane. Functionally, part of the twin-arginine translocation (Tat) system that transports large folded proteins containing a characteristic twin-arginine motif in their signal peptide across membranes. TatA could form the protein-conducting channel of the Tat system. This is Sec-independent protein translocase protein TatA from Rickettsia akari (strain Hartford).